The chain runs to 251 residues: Small ribosomal subunit protein uS4c (251 aa).

S4 RNA-binding domains lie at Met110–Asn170 and Arg189–Glu251.

This sequence belongs to the universal ribosomal protein uS4 family. As to quaternary structure, part of the 30S ribosomal subunit. Contacts protein S5. The interaction surface between S4 and S5 is involved in control of translational fidelity.

The protein localises to the plastid. The protein resides in the chloroplast. Functionally, one of the primary rRNA binding proteins, it binds directly to 16S rRNA where it nucleates assembly of the body of the 30S subunit. In terms of biological role, with S5 and S12 plays an important role in translational accuracy. The chain is Small ribosomal subunit protein uS4c (rps4) from Tetradesmus obliquus (Green alga).